We begin with the raw amino-acid sequence, 363 residues long: Flagellar P-ring protein 2 (363 aa).

An N-terminal signal peptide occupies residues 1 to 20 (MKLRTCCISLMLLLALPLQA).

It belongs to the FlgI family. The basal body constitutes a major portion of the flagellar organelle and consists of four rings (L,P,S, and M) mounted on a central rod.

Its subcellular location is the periplasm. The protein resides in the bacterial flagellum basal body. Its function is as follows. Assembles around the rod to form the L-ring and probably protects the motor/basal body from shearing forces during rotation. This is Flagellar P-ring protein 2 from Photobacterium profundum (strain SS9).